The following is a 501-amino-acid chain: Ribulose bisphosphate carboxylase large chain (501 aa).

Residues N141 and T191 each contribute to the substrate site. The active-site Proton acceptor is the K193. Residue K195 participates in substrate binding. The Mg(2+) site is built by K219, D221, and E222. K219 carries the post-translational modification N6-carboxylysine. H311 (proton acceptor) is an active-site residue. Residues R312, H344, and S396 each coordinate substrate.

This sequence belongs to the RuBisCO large chain family. Type I subfamily. In terms of assembly, heterohexadecamer of 8 large chains and 8 small chains. Mg(2+) serves as cofactor.

It carries out the reaction 2 (2R)-3-phosphoglycerate + 2 H(+) = D-ribulose 1,5-bisphosphate + CO2 + H2O. The enzyme catalyses D-ribulose 1,5-bisphosphate + O2 = 2-phosphoglycolate + (2R)-3-phosphoglycerate + 2 H(+). RuBisCO catalyzes two reactions: the carboxylation of D-ribulose 1,5-bisphosphate, the primary event in carbon dioxide fixation, as well as the oxidative fragmentation of the pentose substrate. Both reactions occur simultaneously and in competition at the same active site. This chain is Ribulose bisphosphate carboxylase large chain, found in Paraburkholderia phymatum (strain DSM 17167 / CIP 108236 / LMG 21445 / STM815) (Burkholderia phymatum).